Consider the following 90-residue polypeptide: Probable Fe(2+)-trafficking protein (90 aa).

It belongs to the Fe(2+)-trafficking protein family.

Could be a mediator in iron transactions between iron acquisition and iron-requiring processes, such as synthesis and/or repair of Fe-S clusters in biosynthetic enzymes. This is Probable Fe(2+)-trafficking protein from Azotobacter vinelandii (strain DJ / ATCC BAA-1303).